The following is a 185-amino-acid chain: Ribosome-recycling factor (185 aa).

Belongs to the RRF family.

The protein resides in the cytoplasm. In terms of biological role, responsible for the release of ribosomes from messenger RNA at the termination of protein biosynthesis. May increase the efficiency of translation by recycling ribosomes from one round of translation to another. This is Ribosome-recycling factor from Wolbachia sp. subsp. Brugia malayi (strain TRS).